Reading from the N-terminus, the 227-residue chain is Esterase Rv3036c (227 aa).

Residues 3–23 (YLIATAVLVAVVLVGWPAAGA) traverse the membrane as a helical segment.

The protein belongs to the RsiV family.

It localises to the cell membrane. Its subcellular location is the secreted. The protein localises to the cell wall. The enzyme catalyses a fatty acid ester + H2O = an aliphatic alcohol + a fatty acid + H(+). The catalysed reaction is an acetyl ester + H2O = an aliphatic alcohol + acetate + H(+). It catalyses the reaction a butanoate ester + H2O = an aliphatic alcohol + butanoate + H(+). It carries out the reaction a hexanoate ester + H2O = an aliphatic alcohol + hexanoate + H(+). The enzyme catalyses a dodecanoate ester + H2O = an aliphatic alcohol + dodecanoate + H(+). The catalysed reaction is a tetradecanoate ester + H2O = an aliphatic alcohol + tetradecanoate + H(+). It catalyses the reaction an octanoate ester + H2O = an aliphatic alcohol + octanoate + H(+). Hydrolyzes ester substrates carbon chain lengths ranging from C2 to C14. In vitro, acetate (C2), butyrate (C4) and caprylate (C6) are hydrolyzed with high efficiency. Has lower activity against laurate (C12), myristate (C14) and caproate (C8), and weak activity against palmitate (C16). This chain is Esterase Rv3036c, found in Mycobacterium tuberculosis (strain ATCC 25618 / H37Rv).